Here is a 1744-residue protein sequence, read N- to C-terminus: Tanabin (1744 aa).

Residues 1–12 form a head region; sequence MEGYLASVSLGE. Residues 8–48 are coil 1A; the sequence is VSLGEESTQMWSLNKRLEAYLSRVKALEEENELLRKEIHSL. Residues 13–320 enclose the IF rod domain; the sequence is ESTQMWSLNK…SLLEAESTRI (308 aa). Residues 49–60 form a linker 1 region; the sequence is RSSKSERCWKKK. A coil 1B region spans residues 61 to 156; it reads HHEEMMKLRD…RDHEEEKALM (96 aa). Residues 157–179 are linker 12; the sequence is EEEIASFSQRLENFRVAPVAFKP. The interval 180-193 is coil 2A; it reads VEVDDYARKLSEIW. The linker 2 stretch occupies residues 194–199; sequence QGAVEE. A coil 2B region spans residues 200-314; the sequence is YKSEVSVLEA…EVATYRSLLE (115 aa). The tail stretch occupies residues 315–1744; sequence AESTRIYTDY…KKALRWKRMF (1430 aa). 2 stretches are compositionally biased toward basic and acidic residues: residues 341–371 and 785–815; these read RRRQ…KNEL and HSHH…DKSS. Disordered stretches follow at residues 341–372, 785–816, 976–996, 1032–1093, 1340–1470, 1485–1506, and 1560–1722; these read RRRQ…NELQ, HSHH…KSSE, EENQ…DIEE, SMED…QQED, DSDL…FGDV, SGLA…SMEN, and AREK…LNGH. Residues 980–990 show a composition bias toward polar residues; that stretch reads LSENEGNQNFG. Residues 1034-1056 are compositionally biased toward acidic residues; the sequence is EDEEEQNNPETEDNIGLEQESDQ. A compositionally biased stretch (basic and acidic residues) spans 1074 to 1086; that stretch reads VVFKPEDMSDKSE. The segment covering 1340 to 1351 has biased composition (acidic residues); it reads DSDLESTEEQVQ. The segment covering 1352 to 1367 has biased composition (basic and acidic residues); that stretch reads ETERIPFKPEDSKMEN. Acidic residues predominate over residues 1368 to 1377; sequence ENSESEESVD. Positions 1386–1398 are enriched in basic and acidic residues; it reads HKSEEFEISKDYQ. Over residues 1412-1421 the composition is skewed to acidic residues; sequence LEDEFEDLTE. Over residues 1423 to 1432 the composition is skewed to basic and acidic residues; the sequence is PDVHEEHQNN. A compositionally biased stretch (polar residues) spans 1433–1442; it reads DDSGASTFIT. Basic and acidic residues predominate over residues 1445 to 1460; sequence DEDKEREVRESVSKDE. Over residues 1496-1505 the composition is skewed to acidic residues; it reads DNEESEDSME. 3 stretches are compositionally biased toward polar residues: residues 1576 to 1586, 1597 to 1621, and 1629 to 1639; these read EFTNENQSASP, EDSV…TSIS, and SNISTTEQSST. The segment covering 1680-1691 has biased composition (acidic residues); sequence RSEDEELDDEGS. Basic and acidic residues predominate over residues 1698 to 1709; it reads NDEKANGEHKDV.

This sequence belongs to the intermediate filament family. As to expression, growth cones of embryonic vertebrate neurons.

This is Tanabin from Xenopus laevis (African clawed frog).